The primary structure comprises 108 residues: Putative septation protein SpoVG (108 aa).

This sequence belongs to the SpoVG family.

Its function is as follows. Could be involved in septation. The polypeptide is Putative septation protein SpoVG (Bdellovibrio bacteriovorus (strain ATCC 15356 / DSM 50701 / NCIMB 9529 / HD100)).